A 419-amino-acid chain; its full sequence is Acetylornithine aminotransferase (419 aa).

Pyridoxal 5'-phosphate is bound by residues 116–117 (GA) and Phe149. Arg152 is a binding site for N(2)-acetyl-L-ornithine. Pyridoxal 5'-phosphate is bound at residue 240-243 (DEVQ). Lys269 bears the N6-(pyridoxal phosphate)lysine mark. Ser296 serves as a coordination point for N(2)-acetyl-L-ornithine. Thr297 is a binding site for pyridoxal 5'-phosphate.

It belongs to the class-III pyridoxal-phosphate-dependent aminotransferase family. ArgD subfamily. Homodimer. Requires pyridoxal 5'-phosphate as cofactor.

It is found in the cytoplasm. The catalysed reaction is N(2)-acetyl-L-ornithine + 2-oxoglutarate = N-acetyl-L-glutamate 5-semialdehyde + L-glutamate. It participates in amino-acid biosynthesis; L-arginine biosynthesis; N(2)-acetyl-L-ornithine from L-glutamate: step 4/4. This chain is Acetylornithine aminotransferase, found in Prochlorococcus marinus (strain SARG / CCMP1375 / SS120).